Here is a 614-residue protein sequence, read N- to C-terminus: Phosphomethylpyrimidine synthase (614 aa).

Residues Asn-226, Met-255, Tyr-284, His-320, Ser-340–Gly-342, Asp-381–Arg-384, and Glu-420 each bind substrate. A Zn(2+)-binding site is contributed by His-424. Residue Tyr-447 coordinates substrate. His-488 serves as a coordination point for Zn(2+). 3 residues coordinate [4Fe-4S] cluster: Cys-568, Cys-571, and Cys-576.

Belongs to the ThiC family. As to quaternary structure, homodimer. Requires [4Fe-4S] cluster as cofactor.

The catalysed reaction is 5-amino-1-(5-phospho-beta-D-ribosyl)imidazole + S-adenosyl-L-methionine = 4-amino-2-methyl-5-(phosphooxymethyl)pyrimidine + CO + 5'-deoxyadenosine + formate + L-methionine + 3 H(+). The protein operates within cofactor biosynthesis; thiamine diphosphate biosynthesis. Functionally, catalyzes the synthesis of the hydroxymethylpyrimidine phosphate (HMP-P) moiety of thiamine from aminoimidazole ribotide (AIR) in a radical S-adenosyl-L-methionine (SAM)-dependent reaction. In Acidovorax ebreus (strain TPSY) (Diaphorobacter sp. (strain TPSY)), this protein is Phosphomethylpyrimidine synthase.